The following is a 476-amino-acid chain: 3-isopropylmalate dehydratase large subunit (476 aa).

The [4Fe-4S] cluster site is built by C353, C413, and C416.

It belongs to the aconitase/IPM isomerase family. LeuC type 1 subfamily. As to quaternary structure, heterodimer of LeuC and LeuD. It depends on [4Fe-4S] cluster as a cofactor.

It carries out the reaction (2R,3S)-3-isopropylmalate = (2S)-2-isopropylmalate. Its pathway is amino-acid biosynthesis; L-leucine biosynthesis; L-leucine from 3-methyl-2-oxobutanoate: step 2/4. Its function is as follows. Catalyzes the isomerization between 2-isopropylmalate and 3-isopropylmalate, via the formation of 2-isopropylmaleate. In Yersinia pseudotuberculosis serotype IB (strain PB1/+), this protein is 3-isopropylmalate dehydratase large subunit.